A 538-amino-acid chain; its full sequence is CTP synthase (538 aa).

Positions 1-267 (MDRAKFIFVT…LTPIARRFNL (267 aa)) are amidoligase domain. Ser-15 contributes to the CTP binding site. Ser-15 contributes to the UTP binding site. Residues 16–21 (SLGKGI) and Asp-73 contribute to the ATP site. 2 residues coordinate Mg(2+): Asp-73 and Glu-141. CTP contacts are provided by residues 148–150 (DME), 188–193 (KTKPTQ), and Lys-224. Residues 188-193 (KTKPTQ) and Lys-224 contribute to the UTP site. In terms of domain architecture, Glutamine amidotransferase type-1 spans 292–538 (KIGFVGKYLS…DFIKSALSKS (247 aa)). Gly-351 lines the L-glutamine pocket. The Nucleophile; for glutamine hydrolysis role is filled by Cys-378. L-glutamine contacts are provided by residues 379–382 (LGMQ), Glu-402, and Arg-469. Catalysis depends on residues His-513 and Glu-515.

Belongs to the CTP synthase family. In terms of assembly, homotetramer.

The catalysed reaction is UTP + L-glutamine + ATP + H2O = CTP + L-glutamate + ADP + phosphate + 2 H(+). It catalyses the reaction L-glutamine + H2O = L-glutamate + NH4(+). It carries out the reaction UTP + NH4(+) + ATP = CTP + ADP + phosphate + 2 H(+). The protein operates within pyrimidine metabolism; CTP biosynthesis via de novo pathway; CTP from UDP: step 2/2. Allosterically activated by GTP, when glutamine is the substrate; GTP has no effect on the reaction when ammonia is the substrate. The allosteric effector GTP functions by stabilizing the protein conformation that binds the tetrahedral intermediate(s) formed during glutamine hydrolysis. Inhibited by the product CTP, via allosteric rather than competitive inhibition. Catalyzes the ATP-dependent amination of UTP to CTP with either L-glutamine or ammonia as the source of nitrogen. Regulates intracellular CTP levels through interactions with the four ribonucleotide triphosphates. The chain is CTP synthase from Helicobacter pylori (strain ATCC 700392 / 26695) (Campylobacter pylori).